We begin with the raw amino-acid sequence, 288 residues long: Bifunctional protein FolD (288 aa).

NADP(+) contacts are provided by residues 165–167 (GRS), serine 190, and isoleucine 231.

This sequence belongs to the tetrahydrofolate dehydrogenase/cyclohydrolase family. Homodimer.

It catalyses the reaction (6R)-5,10-methylene-5,6,7,8-tetrahydrofolate + NADP(+) = (6R)-5,10-methenyltetrahydrofolate + NADPH. The enzyme catalyses (6R)-5,10-methenyltetrahydrofolate + H2O = (6R)-10-formyltetrahydrofolate + H(+). It participates in one-carbon metabolism; tetrahydrofolate interconversion. Catalyzes the oxidation of 5,10-methylenetetrahydrofolate to 5,10-methenyltetrahydrofolate and then the hydrolysis of 5,10-methenyltetrahydrofolate to 10-formyltetrahydrofolate. This chain is Bifunctional protein FolD, found in Nitrosospira multiformis (strain ATCC 25196 / NCIMB 11849 / C 71).